Consider the following 381-residue polypeptide: L-lactate dehydrogenase (381 aa).

The 380-residue stretch at 1–380 (MIISASTDYR…SADSLVRELG (380 aa)) folds into the FMN hydroxy acid dehydrogenase domain. Tyr-24 contacts substrate. Positions 106 and 127 each coordinate FMN. Position 129 (Tyr-129) interacts with substrate. Thr-155 provides a ligand contact to FMN. Residue Arg-164 participates in substrate binding. Lys-251 provides a ligand contact to FMN. The active-site Proton acceptor is the His-275. Arg-278 is a binding site for substrate. An FMN-binding site is contributed by 306-330 (DSGIRTGLDVVRMIALGADSVLLGR).

Belongs to the FMN-dependent alpha-hydroxy acid dehydrogenase family. In terms of assembly, homotetramer. FMN serves as cofactor.

It is found in the cell inner membrane. The catalysed reaction is (S)-lactate + A = pyruvate + AH2. In terms of biological role, catalyzes the conversion of L-lactate to pyruvate. Is coupled to the respiratory chain. The sequence is that of L-lactate dehydrogenase from Pseudomonas aeruginosa (strain LESB58).